Consider the following 228-residue polypeptide: Superoxide dismutase [Mn], mitochondrial (228 aa).

The transit peptide at 1–24 (MALRNLMTKKPFAGILTFRQQLRC) directs the protein to the mitochondrion. The Mn(2+) site is built by His52, His100, Asp189, and His193.

This sequence belongs to the iron/manganese superoxide dismutase family. In terms of assembly, homotetramer. Requires Mn(2+) as cofactor.

It localises to the mitochondrion matrix. The catalysed reaction is 2 superoxide + 2 H(+) = H2O2 + O2. In terms of biological role, destroys superoxide anion radicals which are normally produced within the cells and which are toxic to biological systems. This chain is Superoxide dismutase [Mn], mitochondrial (SODA), found in Capsicum annuum (Capsicum pepper).